The following is a 76-amino-acid chain: DNA-directed RNA polymerase subunit epsilon (76 aa).

It belongs to the RNA polymerase subunit epsilon family. In terms of assembly, RNAP is composed of a core of 2 alpha, a beta and a beta' subunit. The core is associated with a delta subunit, and at least one of epsilon or omega. When a sigma factor is associated with the core the holoenzyme is formed, which can initiate transcription.

It carries out the reaction RNA(n) + a ribonucleoside 5'-triphosphate = RNA(n+1) + diphosphate. Functionally, a non-essential component of RNA polymerase (RNAP). The chain is DNA-directed RNA polymerase subunit epsilon from Streptococcus gordonii (strain Challis / ATCC 35105 / BCRC 15272 / CH1 / DL1 / V288).